Reading from the N-terminus, the 431-residue chain is tRNA(Ile)-lysidine synthase (431 aa).

S19 to S24 serves as a coordination point for ATP.

It belongs to the tRNA(Ile)-lysidine synthase family.

The protein resides in the cytoplasm. The catalysed reaction is cytidine(34) in tRNA(Ile2) + L-lysine + ATP = lysidine(34) in tRNA(Ile2) + AMP + diphosphate + H(+). Functionally, ligates lysine onto the cytidine present at position 34 of the AUA codon-specific tRNA(Ile) that contains the anticodon CAU, in an ATP-dependent manner. Cytidine is converted to lysidine, thus changing the amino acid specificity of the tRNA from methionine to isoleucine. In Staphylococcus aureus (strain Mu50 / ATCC 700699), this protein is tRNA(Ile)-lysidine synthase.